Consider the following 639-residue polypeptide: tRNA uridine 5-carboxymethylaminomethyl modification enzyme MnmG (639 aa).

FAD is bound at residue 13–18 (GGGHAG). 274-288 (GPRYCPSIEDKIHRF) provides a ligand contact to NAD(+).

The protein belongs to the MnmG family. As to quaternary structure, homodimer. Heterotetramer of two MnmE and two MnmG subunits. It depends on FAD as a cofactor.

The protein resides in the cytoplasm. Functionally, NAD-binding protein involved in the addition of a carboxymethylaminomethyl (cmnm) group at the wobble position (U34) of certain tRNAs, forming tRNA-cmnm(5)s(2)U34. This Polynucleobacter asymbioticus (strain DSM 18221 / CIP 109841 / QLW-P1DMWA-1) (Polynucleobacter necessarius subsp. asymbioticus) protein is tRNA uridine 5-carboxymethylaminomethyl modification enzyme MnmG.